A 109-amino-acid chain; its full sequence is Elongation factor G, chloroplastic (109 aa).

It belongs to the GTP-binding elongation factor family. EF-G/EF-2 subfamily.

It localises to the plastid. It is found in the chloroplast. The protein operates within protein biosynthesis; polypeptide chain elongation. In terms of biological role, chloroplast-localized elongation factor EF-G involved in protein synthesis in plastids. Catalyzes the GTP-dependent ribosomal translocation step during translation elongation. During this step, the ribosome changes from the pre-translocational (PRE) to the post-translocational (POST) state as the newly formed A-site-bound peptidyl-tRNA and P-site-bound deacylated tRNA move to the P and E sites, respectively. Catalyzes the coordinated movement of the two tRNA molecules, the mRNA and conformational changes in the ribosome. The chain is Elongation factor G, chloroplastic from Arachis hypogaea (Peanut).